A 726-amino-acid polypeptide reads, in one-letter code: Bromodomain-containing protein 3 (726 aa).

Positions 1–35 (MSTATTVAPAGIPATPGPVNPPPPEVSNPSKPGRK) are disordered. Ser-2 carries the N-acetylserine modification. Over residues 15–26 (TPGPVNPPPPEV) the composition is skewed to pro residues. Residues 34–140 (RKTNQLQYMQ…KIFLQKVAQM (107 aa)) enclose the Bromo 1 domain. The segment at 78-80 (KNP) is acetylated histone H3 binding. Disordered stretches follow at residues 149 to 169 (PPAPKGKGRKPAAGAQSAGTQ) and 237 to 305 (VKKK…AGKK). Low complexity predominate over residues 248–261 (TTTPTTSAITASRS). Residues Ser-263 and Ser-281 each carry the phosphoserine modification. A Bromo 2 domain is found at 306 to 415 (GKLSEHLRYC…DVFEMRFAKM (110 aa)). Lys-414 is covalently cross-linked (Glycyl lysine isopeptide (Lys-Gly) (interchain with G-Cter in SUMO2)). Disordered regions lie at residues 421–462 (EAPA…RATR), 477–575 (LAAL…MSYD), and 637–726 (LQKK…SDSE). Positions 453 to 524 (SDSEEERATR…AEEEKKAKVA (72 aa)) form a coiled coil. Residues 487 to 503 (KPKKKKEKKEKEKKKKD) are compositionally biased toward basic residues. Residues 504–521 (KEKEKEKHKVKAEEEKKA) show a composition bias toward basic and acidic residues. A compositionally biased stretch (low complexity) spans 523–540 (VAPPAKQAQQKKAPAKKA). The 83-residue stretch at 562–644 (DSEEEEEGLP…SCLQKKQRKP (83 aa)) folds into the NET domain. Ser-563 is subject to Phosphoserine. Residues 645–684 (FSASGKKQAAKSKEELAQEKKKELEKRLQDVSGQLSSSKK) adopt a coiled-coil conformation. A compositionally biased stretch (basic and acidic residues) spans 655–673 (KSKEELAQEKKKELEKRLQ). The span at 692-726 (GSAPSGGPSRLSSSSSSESGSSSSSGSSSDSSDSE) shows a compositional bias: low complexity.

It belongs to the BET family. Interacts (via bromo domain 1) with GATA1 acetylated at 'Lys-312' and 'Lys-315'. Interacts (via bromo domain 1) with GATA2 acetylated on lysine residues. Interacts (via NET domain) with CHD4 (via KIKL motif). Interacts (via NET domain) with SMARCA4 (via KIKL motif). Interacts (via NET domain) with NSD3 (via KIKL motif). As to quaternary structure, (Microbial infection) Interacts with the Integrase protein of Moloney murine leukemia virus (MLV). Ubiquitous.

The protein localises to the nucleus. Its subcellular location is the chromosome. With respect to regulation, inhibited by JQ1, a thieno-triazolo-1,4-diazepine derivative, which specifically inhibits members of the BET family (BRD2, BRD3 and BRD4). The first bromo domain is inhibited by GSK778 (iBET-BD1), which specifically inhibits the first bromo domain of members of the BET family (BRD2, BRD3 and BRD4). The second bromo domain is inhibited by ABBV-744, which specifically inhibits the second bromo domain of members of the BET family (BRD2, BRD3 and BRD4). The second bromo domain is inhibited by GSK046 (iBET-BD2), which specifically inhibits the second bromo domain of members of the BET family (BRD2, BRD3 and BRD4). In terms of biological role, chromatin reader that recognizes and binds acetylated histones, thereby controlling gene expression and remodeling chromatin structures. Recruits transcription factors and coactivators to target gene sites, and activates RNA polymerase II machinery for transcriptional elongation. In vitro, binds acetylated lysine residues on the N-terminus of histone H2A, H2B, H3 and H4. Involved in endoderm differentiation via its association with long non-coding RNA (lncRNA) DIGIT: BRD3 undergoes liquid-liquid phase separation upon binding to lncRNA DIGIT, promoting binding to histone H3 acetylated at 'Lys-18' (H3K18ac) to induce endoderm gene expression. Also binds non-histones acetylated proteins, such as GATA1 and GATA2: regulates transcription by promoting the binding of the transcription factor GATA1 to its targets. The polypeptide is Bromodomain-containing protein 3 (Homo sapiens (Human)).